Consider the following 189-residue polypeptide: Elongation factor P (189 aa).

N6-(3,6-diaminohexanoyl)-5-hydroxylysine is present on lysine 34.

This sequence belongs to the elongation factor P family. Post-translationally, may be beta-lysylated on the epsilon-amino group of Lys-34 by the combined action of EpmA and EpmB, and then hydroxylated on the C5 position of the same residue by EpmC (if this protein is present). Lysylation is critical for the stimulatory effect of EF-P on peptide-bond formation. The lysylation moiety may extend toward the peptidyltransferase center and stabilize the terminal 3-CCA end of the tRNA. Hydroxylation of the C5 position on Lys-34 may allow additional potential stabilizing hydrogen-bond interactions with the P-tRNA.

It is found in the cytoplasm. Its pathway is protein biosynthesis; polypeptide chain elongation. Involved in peptide bond synthesis. Alleviates ribosome stalling that occurs when 3 or more consecutive Pro residues or the sequence PPG is present in a protein, possibly by augmenting the peptidyl transferase activity of the ribosome. Modification of Lys-34 is required for alleviation. In Nitrosococcus oceani (strain ATCC 19707 / BCRC 17464 / JCM 30415 / NCIMB 11848 / C-107), this protein is Elongation factor P.